A 332-amino-acid polypeptide reads, in one-letter code: Glyceraldehyde-3-phosphate dehydrogenase 1 (332 aa).

NAD(+)-binding positions include 11-12, Asp33, and Arg78; that span reads RI. D-glyceraldehyde 3-phosphate contacts are provided by residues 149 to 151, Thr180, 209 to 210, and Arg232; these read SCT and TG. Residue Cys150 is the Nucleophile of the active site. Position 314 (Asn314) interacts with NAD(+).

Belongs to the glyceraldehyde-3-phosphate dehydrogenase family. As to quaternary structure, homotetramer.

The protein localises to the cytoplasm. The catalysed reaction is D-glyceraldehyde 3-phosphate + phosphate + NAD(+) = (2R)-3-phospho-glyceroyl phosphate + NADH + H(+). It participates in carbohydrate degradation; glycolysis; pyruvate from D-glyceraldehyde 3-phosphate: step 1/5. This chain is Glyceraldehyde-3-phosphate dehydrogenase 1 (GPD1), found in Candida glabrata (strain ATCC 2001 / BCRC 20586 / JCM 3761 / NBRC 0622 / NRRL Y-65 / CBS 138) (Yeast).